The following is a 426-amino-acid chain: Histidine--tRNA ligase (426 aa).

It belongs to the class-II aminoacyl-tRNA synthetase family. As to quaternary structure, homodimer.

It localises to the cytoplasm. The catalysed reaction is tRNA(His) + L-histidine + ATP = L-histidyl-tRNA(His) + AMP + diphosphate + H(+). This Streptococcus thermophilus (strain CNRZ 1066) protein is Histidine--tRNA ligase.